The sequence spans 878 residues: NUT family member 2B (878 aa).

6 disordered regions span residues 273–324 (WSQG…DDSC), 417–512 (QKSQ…PEEI), 527–560 (LLGP…PPDP), 624–693 (PPLK…GMAR), 709–757 (LRAA…EEEE), and 775–878 (WLPQ…HCSQ). Pro residues-rich tracts occupy residues 278–288 (PLPPPPPPAAQ) and 427–444 (CLPP…PPAP). Basic residues predominate over residues 476-487 (TKARRPPPRPHR). The segment covering 537 to 551 (EPEKQREEGKVKQPQ) has biased composition (basic and acidic residues).

This sequence belongs to the NUT family.

The polypeptide is NUT family member 2B (NUTM2B) (Homo sapiens (Human)).